A 203-amino-acid chain; its full sequence is Urease accessory protein UreG (203 aa).

A GTP-binding site is contributed by 10 to 17 (GPVGAGKT).

This sequence belongs to the SIMIBI class G3E GTPase family. UreG subfamily. Homodimer. UreD, UreF and UreG form a complex that acts as a GTP-hydrolysis-dependent molecular chaperone, activating the urease apoprotein by helping to assemble the nickel containing metallocenter of UreC. The UreE protein probably delivers the nickel.

The protein resides in the cytoplasm. Facilitates the functional incorporation of the urease nickel metallocenter. This process requires GTP hydrolysis, probably effectuated by UreG. The polypeptide is Urease accessory protein UreG (Lachnoclostridium phytofermentans (strain ATCC 700394 / DSM 18823 / ISDg) (Clostridium phytofermentans)).